A 2797-amino-acid polypeptide reads, in one-letter code: Nonribosomal peptide synthetase penN (2797 aa).

The segment at 239-625 is adenylation 1; the sequence is SRPDHPAICA…ARKDSQVKIR (387 aa). Positions 751 to 824 constitute a Carrier 1 domain; sequence TDTERHVHRF…DIVSLVRTAT (74 aa). Ser785 is modified (O-(pantetheine 4'-phosphoryl)serine). Positions 830 to 856 are disordered; the sequence is PSAGAEISRSDAPTESPATGSFEGSGY. The interval 870–1299 is condensation 1; it reads QSFSQARMWF…DIEIGSLLLT (430 aa). Positions 1328 to 1731 are adenylation 2; it reads FHQQVAAHGD…GRMDQQVKIR (404 aa). Residues 1857–1953 are methyltransferase; the sequence is LEIGTGTGMI…VIKQLIQLHD (97 aa). The Carrier 2 domain maps to 2277–2351; it reads SFTDDIERAM…RLAGRVRGFR (75 aa). Position 2311 is an O-(pantetheine 4'-phosphoryl)serine (Ser2311). Residues 2516-2658 form a condensation 2 region; the sequence is YDGISLSSIL…VNRTLIRVQL (143 aa).

Belongs to the NRP synthetase family.

It catalyses the reaction O-methyl-L-tyrosine + anthranilate + S-adenosyl-L-methionine + 2 ATP = (-)-4'-methoxycyclopeptine + 2 AMP + S-adenosyl-L-homocysteine + 2 diphosphate + 2 H(+). It carries out the reaction anthranilate + L-phenylalanine + S-adenosyl-L-methionine + 2 ATP = cyclopeptine + 2 AMP + S-adenosyl-L-homocysteine + 2 diphosphate + 2 H(+). It functions in the pathway secondary metabolite biosynthesis. It participates in alkaloid biosynthesis. The protein operates within mycotoxin biosynthesis. In terms of biological role, nonribosomal peptide synthetase; part of the gene cluster that mediates the biosynthesis of penigequinolones, potent insecticidal alkaloids that contain a highly modified 10-carbon prenyl group. The first stage is catalyzed by the nonribosomal peptide synthetase penN that condenses anthranilic acid and O-methyl-L-tyrosine to produce 4'-methoxycyclopeptin. 4'-methoxycyclopeptin is then converted to 4'-methoxydehydrocyclopeptin by the ketoglutarate-dependent dioxygenase penM through dehydrogenation to form a double bond between C-alpha and C-beta of the O-methyltyrosine side chain. PenM also converts its first product methoxydehydrocyclopeptin to 4'-methoxycyclopenin. The following conversion of 4'methoxycyclopenin into 4'-methoxyviridicatin is catalyzed by the cyclopenase penL. 4'-methoxyviridicatin is the precursor of quinolone natural products, and is further converted to quinolinone B. The prenyltransferase penI then catalyzes the canonical Friedel-Crafts alkylation of quinolinone B with dimethylallyl cation to yield dimethylallyl quinolone, which is subjected to FAD-dependent dehydrogenation by the FAD-linked oxidoreductase penH to yield conjugated aryl diene. The delta(3') double bond then serves as the site of the second alkylation with DMAPP catalyzed by the prenyltransferase penG to yield a carbenium ion intermediate, which can be attacked by H(2)O to yield a styrenyl quinolone containing a C3'-hydroxyprenyl chain, or undergo cyclization to yield yaequinolones J1 and J2. The conversion of the styrenyl quinolone into the tetrahydrofuran-containing yaequinolone C is performed by the FAD-dependent monooxygenase penE and involves epoxidation of the terminal C7'-C8' olefin, followed by epoxide ring opening initiated by the C3' hydroxyl group. The predicted cysteine hydrolase penJ acts as an epoxide hydrolase that enhances the rate of the 5-exo-tet cyclization step, increasing the yield of yaequinolone C. PenF catalyzes the cationic rearrangement of the epoxide formed by penE (before ring opening to produce yaequinolone C) into yaequinolone D. Finally, the short-chain dehydrogenase/reductase (SDR)-like reductase penD, catalyzes both the dehydration of yaequinolone D and the reduction of the resulting oxonium to yield penigequinolone. In Penicillium thymicola, this protein is Nonribosomal peptide synthetase penN.